The following is a 266-amino-acid chain: MRKNTYAMRYIAGQPAERILPPGSFASIGQALPAGAPLSSDEKIRVLVWNIFKQQRAEWLSVLKNFGKDAHLVLLQEAQTTPELVRFATTNYLAADQVPAFVLPQHPSGVMTLSAAHPVYCCPLREREPILRLAKSALVTVYPLPDTRLLMVVNIHAVNFSLGVDVYSKQLLPIGDQIAHHSGPIIMAGDFNAWSRPRMNALYRFAREMSLREVRFTDDQRRKAFGRPLDFVFYRGLNVHEASVLVTRASDHNPLLVEFSPGKPDK.

Belongs to the UPF0294 family.

The protein resides in the cytoplasm. The polypeptide is UPF0294 protein Ent638_0743 (Enterobacter sp. (strain 638)).